Here is a 552-residue protein sequence, read N- to C-terminus: Hyaluronan synthase 2 (552 aa).

The Cytoplasmic segment spans residues 1-11 (MHCERFLCILR). The helical transmembrane segment at 12-32 (IIGTTLFGVSLLLGITAAYIV) threads the bilayer. Residues 33–45 (GYQFIQTDNYYFS) are Extracellular-facing. Residues 46–66 (FGLYGAFLASHLIIQSLFAFL) form a helical membrane-spanning segment. Over 67–374 (EHRKMKKSLE…NAMWFHKHHL (308 aa)) the chain is Cytoplasmic. Threonine 110 carries the post-translational modification Phosphothreonine. A Glycyl lysine isopeptide (Lys-Gly) (interchain with G-Cter in ubiquitin) cross-link involves residue lysine 190. Serine 221 is a glycosylation site (O-linked (GlcNAc) serine). Threonine 328 carries the phosphothreonine modification. A helical transmembrane segment spans residues 375–395 (WMTYEAVITGFFPFFLIATVI). Residues 396-402 (QLFYRGK) are Extracellular-facing. A helical transmembrane segment spans residues 403 to 423 (IWNILLFLLTVQLVGLIKSSF). The Cytoplasmic portion of the chain corresponds to 424 to 429 (ASCLRG). Residues 430–450 (NIVMVFMSLYSVLYMSSLLPA) form a helical membrane-spanning segment. Residues 451-475 (KMFAIATINKAGWGTSGRKTIVVNF) lie on the Extracellular side of the membrane. A helical membrane pass occupies residues 476-496 (IGLIPVSVWFTILLGGVIFTI). Topologically, residues 497-510 (YKESKKPFSESKQT) are cytoplasmic. Residues 511-531 (VLIVGTLLYACYWVMLLTLYV) form a helical membrane-spanning segment. Topologically, residues 532-552 (VLINKCGRRKKGQQYDMVLDV) are extracellular.

The protein belongs to the NodC/HAS family. As to quaternary structure, homodimer; dimerization promotes enzymatic activity. Forms heterodimer with HAS3. Forms heterodimer with HAS1. It depends on Mg(2+) as a cofactor. In terms of processing, phosphorylation at Thr-328 is essential for hyaluronan synthase activity. O-GlcNAcylation at Ser-221 increases the stability of HAS2 and plasma membrane localization. Post-translationally, ubiquitination at Lys-190; this ubiquitination is essential for hyaluronan synthase activity and homo- or hetero-oligomerization. Can also be poly-ubiquitinated. Deubiquitinated by USP17L22/USP17 and USP4. USP17L22/USP17 efficiently removes 'Lys-63'- and 'Lys-48'-linked polyubiquitin chains, whereas USP4 preferentially removes monoubiquitination and, partially, both 'Lys-63'- and 'Lys-48'-linked polyubiquitin chain. In terms of tissue distribution, overexpressed in skin fibroblasts.

The protein localises to the cell membrane. It localises to the endoplasmic reticulum membrane. Its subcellular location is the vesicle. It is found in the golgi apparatus membrane. The protein resides in the lysosome. It carries out the reaction [hyaluronan](n) + UDP-N-acetyl-alpha-D-glucosamine = N-acetyl-beta-D-glucosaminyl-(1-&gt;4)-[hyaluronan](n) + UDP + H(+). It catalyses the reaction N-acetyl-beta-D-glucosaminyl-(1-&gt;4)-[hyaluronan](n) + UDP-alpha-D-glucuronate = [hyaluronan](n+1) + UDP + H(+). It participates in glycan biosynthesis; hyaluronan biosynthesis. Catalyzes the addition of GlcNAc or GlcUA monosaccharides to the nascent hyaluronan polymer. Therefore, it is essential to hyaluronan synthesis a major component of most extracellular matrices that has a structural role in tissues architectures and regulates cell adhesion, migration and differentiation. This is one of three isoenzymes responsible for cellular hyaluronan synthesis and it is particularly responsible for the synthesis of high molecular mass hyaluronan. The sequence is that of Hyaluronan synthase 2 (Has2) from Heterocephalus glaber (Naked mole rat).